Reading from the N-terminus, the 999-residue chain is Probable beta-galactosidase C (999 aa).

The N-terminal stretch at 1–21 (MFFFRFLTTVLLLFNAKLLVA) is a signal peptide. N-linked (GlcNAc...) asparagine glycosylation is present at Asn25. Residues Tyr80, Asn125, Glu127, and Asn185 each contribute to the substrate site. The active-site Proton donor is Glu186. An N-linked (GlcNAc...) asparagine glycan is attached at Asn195. Tyr249 contacts substrate. A disulfide bridge links Cys255 with Cys302. Residue Asn274 is glycosylated (N-linked (GlcNAc...) asparagine). The active-site Nucleophile is Glu285. Substrate is bound at residue Tyr351. 10 N-linked (GlcNAc...) asparagine glycosylation sites follow: Asn389, Asn441, Asn512, Asn519, Asn600, Asn675, Asn713, Asn757, Asn808, and Asn897.

This sequence belongs to the glycosyl hydrolase 35 family.

The protein localises to the secreted. It catalyses the reaction Hydrolysis of terminal non-reducing beta-D-galactose residues in beta-D-galactosides.. Cleaves beta-linked terminal galactosyl residues from gangliosides, glycoproteins, and glycosaminoglycans. The chain is Probable beta-galactosidase C (lacC) from Talaromyces marneffei (strain ATCC 18224 / CBS 334.59 / QM 7333) (Penicillium marneffei).